A 1292-amino-acid chain; its full sequence is Zinc finger protein 423 (1292 aa).

The span at 1-11 (MSRRKQAKPRS) shows a compositional bias: basic residues. Disordered regions lie at residues 1-21 (MSRRKQAKPRSVKVEEGEASD), 33-70 (AGGLEGEPECDRKTSRALEDRNSVTSQEERNEDDEDVE), and 95-125 (AHRCPGDGDDDPQLSWVASSPSSKDVASPTQ). A compositionally biased stretch (basic and acidic residues) spans 41–54 (ECDRKTSRALEDRN). A phosphoserine mark is found at Ser-55 and Ser-58. The segment at 75–101 (YTCDHCQQDFESLADLTDHRAHRCPGD) adopts a C2H2-type 1; degenerate zinc-finger fold. Residues 110-125 (WVASSPSSKDVASPTQ) are compositionally biased toward polar residues. 7 C2H2-type zinc fingers span residues 146-168 (YPCQFCDKSFIRLSYLKRHEQIH), 174-196 (FKCTFCSRLFKHKRSRDRHIKLH), 202-224 (YHCHECEAAFSRSDHLKIHLKTH), 230-252 (FKCSVCKRGFSSTSSLQSHMQAH), 271-294 (FMCDYCEDTFSQTEELEKHVLTLH), 303-326 (LQCIHCPEVFVDESTLLAHIHQAH), and 331-353 (HKCPMCPEQFSSVEGVYCHLDSH). The interval 354 to 407 (RQPDSSNHSVSPDPVLGSVASMSSATPDSSASVERGSTPDSTLKPLRGQKKMRD) is disordered. Residues 371 to 385 (SVASMSSATPDSSAS) show a composition bias toward low complexity. A C2H2-type 9; degenerate zinc finger spans residues 417 to 441 (YSCPYCSKRDFTSLAVLEIHLKTIH). 3 consecutive C2H2-type zinc fingers follow at residues 449–472 (HTCQICLDSMPTLYNLNEHVRKLH), 488–511 (FHCNYCPEMFADINSLQEHIRVSH), and 525–548 (FFCNQCSMGFLTESSLTEHIQQAH). The C2H2-type 13; atypical zinc finger occupies 571 to 596 (YSCPYCTNSPIFGSILKLTKHIKENH). The disordered stretch occupies residues 598 to 635 (NIPLAHSKKSKAEQSPVSSDVEVSSPKRQRLSGSANSI). Ser-612 carries the phosphoserine modification. Over residues 612–623 (SPVSSDVEVSSP) the composition is skewed to low complexity. C2H2-type zinc fingers lie at residues 640 to 662 (YPCNQCDLKFSNFESFQTHLKLH), 670 to 692 (QACPQCKEDFDSQESLLQHLTVH), 700 to 723 (YVCESCDKQFSSVDDLQKHLLDMH), 728 to 751 (YHCTLCQEVFDSKVSIQVHLAVKH), 758 to 781 (YRCTACNWDFRKEADLQVHVKHSH), 789 to 811 (HKCIFCGETFSTEVELQCHITTH), and 815 to 838 (YNCRFCSKAFHAVILLEKHLREKH). Residues 894–916 (YGCDICGAAYTMEVLLQNHRLRD) form a C2H2-type 21; degenerate zinc finger. C2H2-type zinc fingers lie at residues 938-960 (HKCNVCSRTFFSENGLREHLQTH), 967-989 (YMCPICGERFPSLLTLTEHKVTH), and 1028-1050 (FRCVVCMQTVTSTLELKIHGTFH). Ser-1062 bears the Phosphoserine mark. The C2H2-type 25; degenerate zinc finger occupies 1072-1090 (YKCALCLKEFRSKQDLVRL). C2H2-type zinc fingers lie at residues 1128–1151 (LRCPECNVKFESAEDLESHMQVDH), 1176–1198 (YQCIKCQMTFENEREIQIHVANH), 1206–1228 (HECKLCNQMFDSPAKLLCHLIEH), 1237–1260 (FKCPVCFTVFVQANKLQQHIFAVH), and 1267–1290 (YDCSQCPQKFFFQTELQNHTMSQH). Basic and acidic residues predominate over residues 1144-1155 (ESHMQVDHRDLT). The disordered stretch occupies residues 1144–1171 (ESHMQVDHRDLTPETSGPRKGAQTSPVP).

Belongs to the krueppel C2H2-type zinc-finger protein family. Homodimer. Interacts with SMAD1 and SMAD4. Interacts with EBF1. Interacts with PARP1. Interacts with CEP290. In terms of tissue distribution, within the cerebellum, Zfp423 is expressed in both ventricular and external germinal zones. Transiently expressed in newly differentiating olfactory-receptor neurons.

It localises to the nucleus. Functionally, transcription factor that can both act as an activator or a repressor depending on the context. Plays a central role in BMP signaling and olfactory neurogenesis. Associates with SMADs in response to BMP2 leading to activate transcription of BMP target genes. Acts as a transcriptional repressor via its interaction with EBF1, a transcription factor involved in terminal olfactory receptor neurons differentiation; this interaction preventing EBF1 to bind DNA and activate olfactory-specific genes. Involved in olfactory neurogenesis by participating in a developmental switch that regulates the transition from differentiation to maturation in olfactory receptor neurons. Controls proliferation and differentiation of neural precursors in cerebellar vermis formation. This Mus musculus (Mouse) protein is Zinc finger protein 423 (Znf423).